Consider the following 285-residue polypeptide: 1,4-dihydroxy-2-naphthoyl-CoA synthase (285 aa).

Residues R45, 84–89, Y97, 129–133, T155, S161, Y258, and K273 contribute to the substrate site; these read SGGDQK and YSIGG. 154 to 156 serves as a coordination point for hydrogencarbonate; it reads QTG.

It belongs to the enoyl-CoA hydratase/isomerase family. MenB subfamily. Homohexamer. Dimer of a homotrimer. It depends on hydrogencarbonate as a cofactor.

It carries out the reaction 2-succinylbenzoyl-CoA + H(+) = 1,4-dihydroxy-2-naphthoyl-CoA + H2O. It participates in quinol/quinone metabolism; 1,4-dihydroxy-2-naphthoate biosynthesis; 1,4-dihydroxy-2-naphthoate from chorismate: step 6/7. It functions in the pathway quinol/quinone metabolism; menaquinone biosynthesis. Inhibited by sulfite and nitrate. Its function is as follows. Converts o-succinylbenzoyl-CoA (OSB-CoA) to 1,4-dihydroxy-2-naphthoyl-CoA (DHNA-CoA). This Escherichia coli (strain K12) protein is 1,4-dihydroxy-2-naphthoyl-CoA synthase.